A 238-amino-acid polypeptide reads, in one-letter code: Ribosomal RNA small subunit methyltransferase G (238 aa).

S-adenosyl-L-methionine is bound by residues Gly-77, Phe-82, 128-129 (AE), and Arg-147.

This sequence belongs to the methyltransferase superfamily. RNA methyltransferase RsmG family.

Its subcellular location is the cytoplasm. In terms of biological role, specifically methylates the N7 position of guanine in position 535 of 16S rRNA. In Geobacillus kaustophilus (strain HTA426), this protein is Ribosomal RNA small subunit methyltransferase G.